The chain runs to 777 residues: Kelch domain-containing protein 7A (777 aa).

The helical transmembrane segment at 21 to 38 threads the bilayer; it reads VVLSAAALLLVTVAYRLY. Residues 43–207 are disordered; that stretch reads APAQRWGGNG…GLGQLEPPHC (165 aa). S86 is modified (phosphoserine). The segment covering 113–127 has biased composition (basic and acidic residues); sequence TDRKPQRKGSGEERG. An N-linked (GlcNAc...) asparagine glycan is attached at N257. A disordered region spans residues 313 to 359; sequence LTEVPSPRPPPGSLGTGAASGGQAGDTKGAAERAASPQTGPWPSTRG. A compositionally biased stretch (gly residues) spans 326-336; sequence LGTGAASGGQA. Kelch repeat units lie at residues 328–374, 492–538, 541–589, 590–632, and 635–677; these read TGAA…ENPE, QYLV…ICSL, YLFV…ALDG, HLYA…ATVR, and EIFV…AVNG. Residue S365 is modified to Phosphoserine.

It is found in the membrane. The chain is Kelch domain-containing protein 7A (KLHDC7A) from Homo sapiens (Human).